The following is a 144-amino-acid chain: Large ribosomal subunit protein uL16 (144 aa).

The protein belongs to the universal ribosomal protein uL16 family. In terms of assembly, part of the 50S ribosomal subunit.

In terms of biological role, binds 23S rRNA and is also seen to make contacts with the A and possibly P site tRNAs. The chain is Large ribosomal subunit protein uL16 from Oceanobacillus iheyensis (strain DSM 14371 / CIP 107618 / JCM 11309 / KCTC 3954 / HTE831).